The chain runs to 239 residues: Lipid transferase CIDEC (239 aa).

Residues 1 to 35 (MDYAMKSLSLLYPRSLSRHVAVSTAVVTQQLVSKP) are required for liquid-liquid phase separation (LLPS). The CIDE-N domain maps to 41–118 (RARPCRVSTA…VLLKGQKWKP (78 aa)). The short motif at 123-126 (RKKR) is the RKKR polybasic motif element.

Belongs to the CIDE family. Homodimer. Homooligomer; undergoes liquid-liquid phase separation (LLPS) via its N-terminus, facilitating lipid droplet fusion, occurs at the lipid droplet contact sites. Interacts with CIDEA. Interacts with PLIN1. Interacts with NFAT5; this interaction is direct and retains NFAT5 in the cytoplasm. Interacts with CEBPB. Interacts with isoform CLSTN3beta of CLSTN3; inhibiting the lipid transferase activity of CIDEC. In terms of processing, ubiquitinated and targeted to proteasomal degradation, resulting in a short half-life (about 15 minutes in 3T3-L1 cells). Protein stability depends on triaclyglycerol synthesis, fatty acid availability and lipid droplet formation. Expressed almost exclusively in adipose tissue, including subcutaneous and epididymal white adipose tissue (at protein level). Although abundantly present in brown adipose tissue at the mRNA level, the protein is almost undetectable in this tissue, or at moderate levels. Expressed in the mammary gland, in stromal adipose tissue, but becomes undetectable at the end of pregnancy and during lactation (at protein level). Expressed at low levels in skeletal muscle and heart.

The protein localises to the lipid droplet. It is found in the endoplasmic reticulum. The protein resides in the nucleus. The enzyme catalyses a triacyl-sn-glycerol(in) = a triacyl-sn-glycerol(out). Lipid transferase specifically expressed in white adipose tissue, which promotes unilocular lipid droplet formation by mediating lipid droplet fusion. Lipid droplet fusion promotes their enlargement, restricting lipolysis and favoring lipid storage. Localizes on the lipid droplet surface, at focal contact sites between lipid droplets, and mediates atypical lipid droplet fusion by undergoing liquid-liquid phase separation (LLPS) and promoting directional net neutral lipid transfer from the smaller to larger lipid droplets. The transfer direction may be driven by the internal pressure difference between the contacting lipid droplet pair. Its role in neutral lipid transfer and lipid droplet enlargement is activated by the interaction with PLIN1. May also act as a CEBPB coactivator in the white adipose tissue to control the expression of a subset of CEBPB downstream target genes, including SOCS1, SOCS3, TGFB1, TGFBR1, ID2 and XDH. When overexpressed in preadipocytes, induces apoptosis or increases cell susceptibility to apoptosis induced by serum deprivation or TGFB treatment. In Mus musculus (Mouse), this protein is Lipid transferase CIDEC.